A 375-amino-acid chain; its full sequence is DNA replication and repair protein RecF (375 aa).

30-37 (GENAQGKT) provides a ligand contact to ATP.

Belongs to the RecF family.

It is found in the cytoplasm. The RecF protein is involved in DNA metabolism; it is required for DNA replication and normal SOS inducibility. RecF binds preferentially to single-stranded, linear DNA. It also seems to bind ATP. The chain is DNA replication and repair protein RecF from Bacillus cereus (strain ZK / E33L).